The chain runs to 582 residues: Phosphoribosylaminoimidazole carboxylase (582 aa).

One can recognise an ATP-grasp domain in the interval 114-305; sequence KKYLAERGVA…QFENHLRAIL (192 aa). 143-200 provides a ligand contact to ATP; that stretch reads AGRLGLPLMLKAKTLAYDGRGNSPLKSASSGDIQASLKFLGDRPLYAEGWAPFVKEVA.

It in the C-terminal section; belongs to the AIR carboxylase family. Class I subfamily.

It catalyses the reaction 5-amino-1-(5-phospho-D-ribosyl)imidazole-4-carboxylate + H(+) = 5-amino-1-(5-phospho-beta-D-ribosyl)imidazole + CO2. It participates in purine metabolism; IMP biosynthesis via de novo pathway; 5-amino-1-(5-phospho-D-ribosyl)imidazole-4-carboxylate from 5-amino-1-(5-phospho-D-ribosyl)imidazole (carboxylase route): step 1/1. The polypeptide is Phosphoribosylaminoimidazole carboxylase (ADE2) (Cryptococcus neoformans var. neoformans serotype D (strain JEC21 / ATCC MYA-565) (Filobasidiella neoformans)).